Here is a 315-residue protein sequence, read N- to C-terminus: Small ribosomal subunit biogenesis GTPase RsgA (315 aa).

The region spanning 80–241 (LSKQTHIIAS…IIDTPGIKGF (162 aa)) is the CP-type G domain. Residues 129–132 (NKVD) and 183–191 (GHSGTGKST) each bind GTP. Zn(2+) is bound by residues Cys-265, Cys-270, His-272, and Cys-278.

Belongs to the TRAFAC class YlqF/YawG GTPase family. RsgA subfamily. In terms of assembly, monomer. Associates with 30S ribosomal subunit, binds 16S rRNA. Requires Zn(2+) as cofactor.

It localises to the cytoplasm. Its function is as follows. One of several proteins that assist in the late maturation steps of the functional core of the 30S ribosomal subunit. Helps release RbfA from mature subunits. May play a role in the assembly of ribosomal proteins into the subunit. Circularly permuted GTPase that catalyzes slow GTP hydrolysis, GTPase activity is stimulated by the 30S ribosomal subunit. This Christiangramia forsetii (strain DSM 17595 / CGMCC 1.15422 / KT0803) (Gramella forsetii) protein is Small ribosomal subunit biogenesis GTPase RsgA.